The primary structure comprises 170 residues: Macro domain-containing protein VPA0103 (170 aa).

The 170-residue stretch at 1–170 (MNAISLVQGD…SIWQHALTQH (170 aa)) folds into the Macro domain.

Belongs to the MacroD-type family.

The protein is Macro domain-containing protein VPA0103 of Vibrio parahaemolyticus serotype O3:K6 (strain RIMD 2210633).